Here is a 424-residue protein sequence, read N- to C-terminus: Histidine--tRNA ligase (424 aa).

The protein belongs to the class-II aminoacyl-tRNA synthetase family. In terms of assembly, homodimer.

It localises to the cytoplasm. The enzyme catalyses tRNA(His) + L-histidine + ATP = L-histidyl-tRNA(His) + AMP + diphosphate + H(+). The chain is Histidine--tRNA ligase from Shewanella pealeana (strain ATCC 700345 / ANG-SQ1).